We begin with the raw amino-acid sequence, 559 residues long: Chaperonin GroEL 1 (559 aa).

ATP contacts are provided by residues 29-32 (TIGP), 86-90 (DGTTT), G413, 476-478 (NAL), and D492. Residues 521–541 (KPEPPAPAPAGDGDPMGGMGG) form a disordered region.

This sequence belongs to the chaperonin (HSP60) family. As to quaternary structure, forms a cylinder of 14 subunits composed of two heptameric rings stacked back-to-back. Interacts with the co-chaperonin GroES.

The protein localises to the cytoplasm. The enzyme catalyses ATP + H2O + a folded polypeptide = ADP + phosphate + an unfolded polypeptide.. Together with its co-chaperonin GroES, plays an essential role in assisting protein folding. The GroEL-GroES system forms a nano-cage that allows encapsulation of the non-native substrate proteins and provides a physical environment optimized to promote and accelerate protein folding. This chain is Chaperonin GroEL 1, found in Synechococcus sp. (strain CC9605).